Reading from the N-terminus, the 166-residue chain is Urocortin-3 (166 aa).

The signal sequence occupies residues 1–23; the sequence is MLVPAPFLLVLLLLLGAPQVGLS. The propeptide occupies 24–123; it reads QRSPKAGSSP…QDKAKSDRRT (100 aa). Residues 41–51 show a composition bias toward basic and acidic residues; it reads REAEKSQRKDT. Residues 41-123 are disordered; sequence REAEKSQRKD…QDKAKSDRRT (83 aa). Over residues 68 to 77 the composition is skewed to acidic residues; it reads EDQEGQEEED. Over residues 86-96 the composition is skewed to gly residues; it reads SVGGGGGGGAG. The segment covering 113–123 has biased composition (basic and acidic residues); it reads SQDKAKSDRRT. Isoleucine 162 bears the Isoleucine amide mark.

Belongs to the sauvagine/corticotropin-releasing factor/urotensin I family. In terms of assembly, binds with high affinity to CRF receptors 2-alpha and 2-beta.

The protein localises to the secreted. Functionally, suppresses food intake, delays gastric emptying and decreases heat-induced edema. Might represent an endogenous ligand for maintaining homeostasis after stress. This is Urocortin-3 (UCN3) from Bos taurus (Bovine).